A 430-amino-acid chain; its full sequence is Arrestin-related trafficking adapter 10 (430 aa).

A disordered region spans residues 55-75; that stretch reads AEADRHSSRLPQDPQTQYTKE. Positions 63-72 are enriched in polar residues; that stretch reads RLPQDPQTQY.

Belongs to the ART10 family.

It is found in the cytoplasm. Functionally, may regulate endocytosis by recruiting RSP5 ubiquitin ligase activity to specific plasma membrane proteins in response to extracellular stimuli. The protein is Arrestin-related trafficking adapter 10 (ART10) of Eremothecium gossypii (strain ATCC 10895 / CBS 109.51 / FGSC 9923 / NRRL Y-1056) (Yeast).